A 945-amino-acid polypeptide reads, in one-letter code: MEVLSTSSPLTLHSHRLLSASSSSSHVTSIAASSLSSFASSYLGISLSNRTIHRFSTTPTNLRRFPQRKRKKFTPISAVFERFTERAIRAIIFSQKEAKSLGKDMVYTQHLLLGLIAEDRDPQGFLGSGITIDKAREAVWSIWDEANSDSKQEEASSTSYSKSTDMPFSISTKRVFEAAVEYSRTMDCQYIAPEHIAVGLFTVDDGSAGRVLKRLGANMNLLTAAALTRLKGEIAKDGREPSSSSKGSFESPPSGRIAGSGPGGKKAKNVLEQFCVDLTARASEGLIDPVIGREKEVQRVIQILCRRTKNNPILLGEAGVGKTAIAEGLAISIAEASAPGFLLTKRIMSLDIGLLMAGAKERGELEARVTALISEVKKSGKVILFIDEVHTLIGSGTVGRGNKGSGLDIANLLKPSLGRGELQCIASTTLDEFRSQFEKDKALARRFQPVLINEPSEEDAVKILLGLREKYEAHHNCKYTMEAIDAAVYLSSRYIADRFLPDKAIDLIDEAGSRARIEAFRKKKEDAICILSKPPNDYWQEIKTVQAMHEVVLSSRQKQDDGDAISDESGELVEESSLPPAAGDDEPILVGPDDIAAVASVWSGIPVQQITADERMLLMSLEDQLRGRVVGQDEAVAAISRAVKRSRVGLKDPDRPIAAMLFCGPTGVGKTELTKALAANYFGSEESMLRLDMSEYMERHTVSKLIGSPPGYVGFEEGGMLTEAIRRRPFTVVLFDEIEKAHPDIFNILLQLFEDGHLTDSQGRRVSFKNALIIMTSNVGSLAIAKGRHGSIGFILDDDEEAASYTGMKALVVEELKNYFRPELLNRIDEIVIFRQLEKAQMMEILNLMLQDLKSRLVALGVGLEVSEPVKELICKQGYDPAYGARPLRRTVTEIVEDPLSEAFLAGSFKPGDTAFVVLDDTGNPSVRTKPDSSTIRVTDKTSIA.

Residues 1 to 89 constitute a chloroplast transit peptide; that stretch reads MEVLSTSSPL…FERFTERAIR (89 aa). 2 repeat regions span residues 90–146 and 168–233; these read AIIF…WDEA and FSIS…LKGE. The region spanning 90–233 is the Clp R domain; the sequence is AIIFSQKEAK…AAALTRLKGE (144 aa). Residues 233–264 are disordered; that stretch reads EIAKDGREPSSSSKGSFESPPSGRIAGSGPGG. A compositionally biased stretch (low complexity) spans 241–255; it reads PSSSSKGSFESPPSG. Residues 271–523 are i; that stretch reads LEQFCVDLTA…RARIEAFRKK (253 aa). 316-323 serves as a coordination point for ATP; that stretch reads GEAGVGKT. Residues 555-586 form a disordered region; it reads SRQKQDDGDAISDESGELVEESSLPPAAGDDE. Residues 562–574 are compositionally biased toward acidic residues; it reads GDAISDESGELVE. An II region spans residues 590 to 781; sequence VGPDDIAAVA…LIIMTSNVGS (192 aa). 664 to 671 lines the ATP pocket; sequence GPTGVGKT.

The protein belongs to the ClpA/ClpB family. ClpD subfamily. Homodimer and homohexamer. Hexamerization upon addition of ATP. Interacts with CLPT1. Stably associated with the import machinery. Mg(2+) serves as cofactor. In terms of tissue distribution, expressed in stems and leaves.

The protein localises to the plastid. Its subcellular location is the chloroplast stroma. It carries out the reaction ATP + H2O = ADP + phosphate + H(+). In terms of biological role, molecular chaperone that interact with a ClpP-like protease involved in degradation of denatured proteins in the chloroplast. The ATPase activity of CLPD is stimulated by CLPT1. Has no ADPase activity. Interacts with transit peptides with a positional preference. Localization of the signal sequence at the N-terminal end of a protein seems mandatory for interaction to take place. The protein is Chaperone protein ClpD, chloroplastic of Arabidopsis thaliana (Mouse-ear cress).